The sequence spans 542 residues: Organic anion transporter 3 (542 aa).

Topologically, residues Met1–Arg9 are cytoplasmic. Ser4 is subject to Phosphoserine. A helical membrane pass occupies residues Val10 to Asn30. The Extracellular segment spans residues Met31–Glu123. Residues Asn86 and Asn102 are each glycosylated (N-linked (GlcNAc...) asparagine). A helical transmembrane segment spans residues Met124–Ser144. Over Asp145–Thr154 the chain is Cytoplasmic. The helical transmembrane segment at Cys155–Ile175 threads the bilayer. Residue Tyr176 is a topological domain, extracellular. Residues Met177–Leu197 traverse the membrane as a helical segment. The Cytoplasmic portion of the chain corresponds to Asn198–Thr212. The helical transmembrane segment at Ala213 to Pro233 threads the bilayer. At Gln234 to Arg236 the chain is on the extracellular side. Residues Trp237–Pro257 traverse the membrane as a helical segment. The Cytoplasmic segment spans residues Glu258–Thr327. The helical transmembrane segment at Phe328–Val348 threads the bilayer. At Glu349 to Asn354 the chain is on the extracellular side. The helical transmembrane segment at Leu355–Leu375 threads the bilayer. Residues Ser376–Gln386 lie on the Cytoplasmic side of the membrane. The chain crosses the membrane as a helical span at residues Ala387 to Leu407. The Extracellular segment spans residues Gln408–Arg411. The chain crosses the membrane as a helical span at residues Thr412 to Tyr432. Residues Thr433–Pro471 lie on the Cytoplasmic side of the membrane. A helical membrane pass occupies residues Phe472 to Leu492. The Extracellular segment spans residues Pro493 to Ser542. Residues Lys515–Ser542 are disordered. A compositionally biased stretch (basic and acidic residues) spans Pro517–Ser527.

Belongs to the major facilitator (TC 2.A.1) superfamily. Organic cation transporter (TC 2.A.1.19) family. As to expression, strongly expressed in kidney. Weaker expression in brain and skeletal muscle. Expressed in adrenal glands.

It localises to the basolateral cell membrane. It catalyses the reaction estrone 3-sulfate(out) + glutarate(in) = estrone 3-sulfate(in) + glutarate(out). The catalysed reaction is estrone 3-sulfate(in) + 2-oxoglutarate(out) = estrone 3-sulfate(out) + 2-oxoglutarate(in). The enzyme catalyses glutarate(in) + 2-oxoglutarate(out) = glutarate(out) + 2-oxoglutarate(in). It carries out the reaction urate(in) + 2-oxoglutarate(out) = urate(out) + 2-oxoglutarate(in). It catalyses the reaction taurocholate(out) + glutarate(in) = taurocholate(in) + glutarate(out). The catalysed reaction is dehydroepiandrosterone 3-sulfate(out) + glutarate(in) = dehydroepiandrosterone 3-sulfate(in) + glutarate(out). The enzyme catalyses prostaglandin F2alpha(out) + glutarate(in) = prostaglandin F2alpha(in) + glutarate(out). It carries out the reaction prostaglandin F2alpha(out) + 2-oxoglutarate(in) = prostaglandin F2alpha(in) + 2-oxoglutarate(out). It catalyses the reaction (R)-carnitine(out) + 2-oxoglutarate(in) = (R)-carnitine(in) + 2-oxoglutarate(out). The catalysed reaction is glutarate(in) + (R)-carnitine(out) = glutarate(out) + (R)-carnitine(in). The enzyme catalyses prostaglandin E2(out) + 2-oxoglutarate(in) = prostaglandin E2(in) + 2-oxoglutarate(out). It carries out the reaction prostaglandin E2(out) + glutarate(in) = prostaglandin E2(in) + glutarate(out). It catalyses the reaction urate(in) + glutarate(out) = urate(out) + glutarate(in). The catalysed reaction is taurocholate(out) + 2-oxoglutarate(in) = taurocholate(in) + 2-oxoglutarate(out). The enzyme catalyses dehydroepiandrosterone 3-sulfate(out) + 2-oxoglutarate(in) = dehydroepiandrosterone 3-sulfate(in) + 2-oxoglutarate(out). It carries out the reaction kynurenate(out) + a dicarboxylate(in) = kynurenate(in) + a dicarboxylate(out). It catalyses the reaction (indol-3-yl)acetate(out) + a dicarboxylate(in) = (indol-3-yl)acetate(in) + a dicarboxylate(out). The catalysed reaction is indoxyl sulfate(out) + a dicarboxylate(in) = indoxyl sulfate(in) + a dicarboxylate(out). The enzyme catalyses N-benzoylglycine(out) + a dicarboxylate(in) = N-benzoylglycine(in) + a dicarboxylate(out). It carries out the reaction 3-carboxy-4-methyl-5-propyl-2-furanpropanoate(out) + a dicarboxylate(in) = 3-carboxy-4-methyl-5-propyl-2-furanpropanoate(in) + a dicarboxylate(out). It catalyses the reaction (6R)-L-erythro-5,6,7,8-tetrahydrobiopterin(out) + a dicarboxylate(in) = (6R)-L-erythro-5,6,7,8-tetrahydrobiopterin(in) + a dicarboxylate(out). The catalysed reaction is L-erythro-7,8-dihydrobiopterin(out) + a dicarboxylate(in) = L-erythro-7,8-dihydrobiopterin(in) + a dicarboxylate(out). The enzyme catalyses L-sepiapterin(out) + a dicarboxylate(in) = L-sepiapterin(in) + a dicarboxylate(out). In terms of biological role, functions as an organic anion/dicarboxylate exchanger that couples organic anion uptake indirectly to the sodium gradient. Transports organic anions such as estrone 3-sulfate (E1S) and urate in exchange for dicarboxylates such as glutarate or ketoglutarate (2-oxoglutarate). Plays an important role in the excretion of endogenous and exogenous organic anions, especially from the kidney and the brain. E1S transport is pH- and chloride-dependent and may also involve E1S/cGMP exchange. Responsible for the transport of prostaglandin E2 (PGE2) and prostaglandin F2(alpha) (PGF2(alpha)) in the basolateral side of the renal tubule. Involved in the transport of neuroactive tryptophan metabolites kynurenate and xanthurenate. Functions as a biopterin transporters involved in the uptake and the secretion of coenzymes tetrahydrobiopterin (BH4), dihydrobiopterin (BH2) and sepiapterin to urine, thereby determining baseline levels of blood biopterins. May be involved in the basolateral transport of steviol, a metabolite of the popular sugar substitute stevioside. May participate in the detoxification/ renal excretion of drugs and xenobiotics, such as the histamine H(2)-receptor antagonists fexofenadine and cimetidine, the antibiotic benzylpenicillin (PCG), the anionic herbicide 2,4-dichloro-phenoxyacetate (2,4-D), the diagnostic agent p-aminohippurate (PAH), the antiviral acyclovir (ACV), and the mycotoxin ochratoxin (OTA), by transporting these exogenous organic anions across the cell membrane in exchange for dicarboxylates such as 2-oxoglutarate. Contributes to the renal uptake of potent uremic toxins (indoxyl sulfate (IS), indole acetate (IA), hippurate/N-benzoylglycine (HA) and 3-carboxy-4-methyl-5-propyl-2-furanpropionate (CMPF)), pravastatin, PCG, E1S and dehydroepiandrosterone sulfate (DHEAS), and is partly involved in the renal uptake of temocaprilat (an angiotensin-converting enzyme (ACE) inhibitor). May contribute to the release of cortisol in the adrenals. Involved in one of the detoxification systems on the choroid plexus (CP), removes substrates such as E1S or taurocholate (TC), PCG, 2,4-D and PAH, from the cerebrospinal fluid (CSF) to the blood for eventual excretion in urine and bile. Also contributes to the uptake of several other organic compounds such as the prostanoids prostaglandin E(2) and prostaglandin F(2-alpha), L-carnitine, and the therapeutic drugs allopurinol, 6-mercaptopurine (6-MP) and 5-fluorouracil (5-FU). Mediates the transport of PAH, PCG, and the statins pravastatin and pitavastatin, from the cerebrum into the blood circulation across the blood-brain barrier (BBB). In summary, plays a role in the efflux of drugs and xenobiotics, helping reduce their undesired toxicological effects on the body. The protein is Organic anion transporter 3 of Homo sapiens (Human).